The chain runs to 439 residues: MVAGAVAGALIGAAVVAATAATGGLAAVILAGSIAAGGLSMFQIVKGLTTIFELPEPTTGVLIRGSFNVYVNSRNAMRAGDDVSATCSGLPLNHPLWPFPVLIAEGSATVYINGKPAARLQSKMVCGAHIKTGSQNTFIGGPTERVAFVLDLEEWLHTGLEALGLAALAGGLLLAAMAGVAALVGVVAIGGLMMGGMALLGDLGDRLGPGYRDLFQGVAGMALLGFGPKMARLGNAPKGAPKTQVPKGFEKVYGKAPAAKAEIDAVADGLAAKHGGRVAKAPIKSRERAMQKINNDYKGDPTKIKDLARNTIIVEGDKVNTVAAELANRGAKVKVIDGNADPLGYSGVNSTMNTKAGIPGEIQVNSPEMIYAKESEDMARILLGNDTYDAVAAKAGVPGGQGHKYYEDWRVLDPKSPEAQAIAEKSRAYYDAVRKGNGN.

The protein localises to the secreted. The catalysed reaction is AMP + ATP = adenosine 3'-diphosphate,5'-phosphate + AMP + H(+). The enzyme catalyses ADP + ATP = adenosine 3'-diphosphate,5'-diphosphate + AMP. It carries out the reaction 2 ATP = adenosine 3'-diphosphate,5'-triphosphate + AMP. Type VI secretion exported toxin that pyrophosphorylates adenosine nucleotides to produce (p)ppApp. Thereby, depletes cellular ADP and ATP to dysregulate central metabolism in competitor cells. In Pseudomonas aeruginosa (strain UCBPP-PA14), this protein is (p)ppApp synthetase toxin Tas1 (tas1).